The sequence spans 159 residues: Large ribosomal subunit protein uL15 (159 aa).

Residues 1 to 13 (MRLNELRDNDGAT) are compositionally biased toward basic and acidic residues. The interval 1-41 (MRLNELRDNDGATKIRTRVGRGIGSGKGKTGGRGVKGQKSR) is disordered. Residues 21–35 (RGIGSGKGKTGGRGV) show a composition bias toward gly residues.

Belongs to the universal ribosomal protein uL15 family. As to quaternary structure, part of the 50S ribosomal subunit.

Binds to the 23S rRNA. The polypeptide is Large ribosomal subunit protein uL15 (Maricaulis maris (strain MCS10) (Caulobacter maris)).